Reading from the N-terminus, the 127-residue chain is Small ribosomal subunit protein uS13 (127 aa).

The disordered stretch occupies residues 90-127 (KRHREGLPVNGQRTRTNARTRKGKRKTVAGRSQSTQKK). Over residues 105-117 (TNARTRKGKRKTV) the composition is skewed to basic residues.

It belongs to the universal ribosomal protein uS13 family. As to quaternary structure, part of the 30S ribosomal subunit. Forms a loose heterodimer with protein S19. Forms two bridges to the 50S subunit in the 70S ribosome.

Its function is as follows. Located at the top of the head of the 30S subunit, it contacts several helices of the 16S rRNA. In the 70S ribosome it contacts the 23S rRNA (bridge B1a) and protein L5 of the 50S subunit (bridge B1b), connecting the 2 subunits; these bridges are implicated in subunit movement. Contacts the tRNAs in the A and P-sites. The protein is Small ribosomal subunit protein uS13 of Salinibacter ruber (strain DSM 13855 / M31).